The sequence spans 174 residues: NADH-quinone oxidoreductase subunit B (174 aa).

[4Fe-4S] cluster-binding residues include cysteine 53, cysteine 54, cysteine 118, and cysteine 148.

It belongs to the complex I 20 kDa subunit family. In terms of assembly, NDH-1 is composed of 14 different subunits. Subunits NuoB, C, D, E, F, and G constitute the peripheral sector of the complex. The cofactor is [4Fe-4S] cluster.

It localises to the cell inner membrane. The enzyme catalyses a quinone + NADH + 5 H(+)(in) = a quinol + NAD(+) + 4 H(+)(out). Its function is as follows. NDH-1 shuttles electrons from NADH, via FMN and iron-sulfur (Fe-S) centers, to quinones in the respiratory chain. Couples the redox reaction to proton translocation (for every two electrons transferred, four hydrogen ions are translocated across the cytoplasmic membrane), and thus conserves the redox energy in a proton gradient. The sequence is that of NADH-quinone oxidoreductase subunit B from Ruegeria sp. (strain TM1040) (Silicibacter sp.).